The sequence spans 611 residues: Oxidoreductase cicC (611 aa).

The N-terminal stretch at 1 to 20 is a signal peptide; that stretch reads MALRYLNKFSLLSLAVPTLA. FAD-binding positions include 45-46 and 65-66; these read NA and EA. N-linked (GlcNAc...) asparagine glycosylation is found at Asn-76 and Asn-113. Residues Val-123 and 131-134 each bind FAD; that span reads NLMT. N-linked (GlcNAc...) asparagine glycans are attached at residues Asn-282, Asn-410, and Asn-475. His-547 (proton acceptor) is an active-site residue. His-547 acts as the Proton donor in catalysis. FAD is bound at residue Ala-581. Residue His-591 is the Proton acceptor of the active site. FAD is bound at residue 592–593; sequence PI.

Belongs to the GMC oxidoreductase family. Requires FAD as cofactor.

It functions in the pathway phytotoxin biosynthesis. In terms of biological role, oxidoreductase; part of the gene cluster that mediates the biosynthesis of cichorine, a phytotoxin active against knapweed, corn, and soybeans. The first step in the pathway is performed by the non-reducing polyketide synthase pkbA that condenses one acetyl-CoA starter unit with 3 malonyl-CoA units. PkbA also catalyzes one methylation step to produce 3-methylorsellinate. The nonribosomal peptide synthase-like protein cicB, the cytochrome P450 monooxygenase cicH and the O-methyltransferase cicE are involved in the conversion of 3-methylorsellinate into nidulol. CicB converts 3-methylorsellinate to a yet unidentified intermediate, cicH may play a ring-closing role for cichorine and cicE is plausibly responsible for the methylation of one of the phenol groups. The oxidoreductase cicC acts downstream with still unidentified enzymes to further convert nidulol into cichorine. The chain is Oxidoreductase cicC from Emericella nidulans (strain FGSC A4 / ATCC 38163 / CBS 112.46 / NRRL 194 / M139) (Aspergillus nidulans).